We begin with the raw amino-acid sequence, 382 residues long: Lipoyl synthase, mitochondrial (382 aa).

Residues 1 to 30 constitute a mitochondrion transit peptide; the sequence is MHGRRHLAASLARALTYAPSRSISSTPSLL. Polar residues predominate over residues 25–34; sequence STPSLLQTLD. The disordered stretch occupies residues 25 to 47; sequence STPSLLQTLDPSTPSPAAAPPTA. Positions 112, 117, 123, 143, 147, 150, and 359 each coordinate [4Fe-4S] cluster. Residues 128-348 enclose the Radical SAM core domain; it reads ETGTATATIM…RSLGVDMGFR (221 aa).

It belongs to the radical SAM superfamily. Lipoyl synthase family. [4Fe-4S] cluster is required as a cofactor.

The protein resides in the mitochondrion. It carries out the reaction [[Fe-S] cluster scaffold protein carrying a second [4Fe-4S](2+) cluster] + N(6)-octanoyl-L-lysyl-[protein] + 2 oxidized [2Fe-2S]-[ferredoxin] + 2 S-adenosyl-L-methionine + 4 H(+) = [[Fe-S] cluster scaffold protein] + N(6)-[(R)-dihydrolipoyl]-L-lysyl-[protein] + 4 Fe(3+) + 2 hydrogen sulfide + 2 5'-deoxyadenosine + 2 L-methionine + 2 reduced [2Fe-2S]-[ferredoxin]. Its pathway is protein modification; protein lipoylation via endogenous pathway; protein N(6)-(lipoyl)lysine from octanoyl-[acyl-carrier-protein]: step 2/2. Its function is as follows. Catalyzes the radical-mediated insertion of two sulfur atoms into the C-6 and C-8 positions of the octanoyl moiety bound to the lipoyl domains of lipoate-dependent enzymes, thereby converting the octanoylated domains into lipoylated derivatives. This Oryza sativa subsp. indica (Rice) protein is Lipoyl synthase, mitochondrial.